Here is a 314-residue protein sequence, read N- to C-terminus: Protein REGULATOR OF FATTY ACID COMPOSITION 3, chloroplastic (314 aa).

Residues 1 to 47 (MESLLHASSSLVSLRPRIDGRDSFINPSRVCLNPSLGRRGSKPLPLV) constitute a chloroplast transit peptide. 2 disordered regions span residues 49–73 (AAKK…ATGP) and 214–314 (AITE…NVGG). Residues 56–69 (KKDDNHNFSARPDE) show a composition bias toward basic and acidic residues. 2 stretches are compositionally biased toward acidic residues: residues 233-269 (EYYD…DDDG) and 277-294 (GDEE…EQEE). Residues 295–308 (GQDKSTNGRRETRR) are compositionally biased toward basic and acidic residues.

This sequence belongs to the bacterial ribosomal protein bS6 family. As to quaternary structure, interacts with CFM3B/SPRT2 in plastids. As to expression, expressed ubiquitously in roots, leaves, stems, flower buds, flowers and siliques.

The protein resides in the plastid. The protein localises to the chloroplast. Its function is as follows. Prevents non-specific action of the splicing factor CFM3b during plastid rRNA biogenesis to improve the accuracy of plastid rRNA processing. Required for plastid functions such as photosynthesis, intracellular distribution, plastid rRNAs biosynthesis and plastid gene expression in roots. Involved in a sucrose-conditional process important for the organization of root lateral and apical meristems (e.g. establishment of RAM from pericycle and symplasmic connectivity), and subsequent primary and lateral roots development. Modulates C18 unsaturated fatty acid metabolism. The protein is Protein REGULATOR OF FATTY ACID COMPOSITION 3, chloroplastic of Arabidopsis thaliana (Mouse-ear cress).